The chain runs to 177 residues: RNA pyrophosphohydrolase (177 aa).

Residues 6–149 (GYRPNVGIVI…KRDVYRRVMK (144 aa)) enclose the Nudix hydrolase domain. Positions 38–59 (GGINPGESAEQAMYRELFEEVG) match the Nudix box motif.

Belongs to the Nudix hydrolase family. RppH subfamily. A divalent metal cation is required as a cofactor.

Functionally, accelerates the degradation of transcripts by removing pyrophosphate from the 5'-end of triphosphorylated RNA, leading to a more labile monophosphorylated state that can stimulate subsequent ribonuclease cleavage. The chain is RNA pyrophosphohydrolase from Cronobacter sakazakii (strain ATCC BAA-894) (Enterobacter sakazakii).